A 608-amino-acid polypeptide reads, in one-letter code: Protein FAM151A (608 aa).

A helical transmembrane segment spans residues W14–L34. The tract at residues R588–R608 is disordered.

This sequence belongs to the menorin family.

The protein localises to the membrane. The sequence is that of Protein FAM151A (Fam151a) from Rattus norvegicus (Rat).